The chain runs to 654 residues: Fructose-1,6-bisphosphatase class 3 (654 aa).

Positions 288 to 307 (NPAFKPKKRPDKHERLTQRE) are disordered. Positions 298 to 307 (DKHERLTQRE) are enriched in basic and acidic residues.

It belongs to the FBPase class 3 family. It depends on Mn(2+) as a cofactor.

The catalysed reaction is beta-D-fructose 1,6-bisphosphate + H2O = beta-D-fructose 6-phosphate + phosphate. The protein operates within carbohydrate biosynthesis; gluconeogenesis. The chain is Fructose-1,6-bisphosphatase class 3 from Staphylococcus aureus (strain USA300).